An 871-amino-acid polypeptide reads, in one-letter code: Protein translocase subunit SecA (871 aa).

ATP-binding positions include glutamine 80, 98 to 102 (GEGKT), and aspartate 537. The interval 852–871 (MEKGKKKGGSHGLGKIRVKR) is disordered. Basic residues predominate over residues 855-871 (GKKKGGSHGLGKIRVKR).

The protein belongs to the SecA family. As to quaternary structure, monomer and homodimer. Part of the essential Sec protein translocation apparatus which comprises SecA, SecYEG and auxiliary proteins SecDF. Other proteins may also be involved.

It is found in the cell inner membrane. The protein localises to the cytoplasm. The catalysed reaction is ATP + H2O + cellular proteinSide 1 = ADP + phosphate + cellular proteinSide 2.. Functionally, part of the Sec protein translocase complex. Interacts with the SecYEG preprotein conducting channel. Has a central role in coupling the hydrolysis of ATP to the transfer of proteins into and across the cell membrane, serving as an ATP-driven molecular motor driving the stepwise translocation of polypeptide chains across the membrane. The sequence is that of Protein translocase subunit SecA from Thermotoga neapolitana (strain ATCC 49049 / DSM 4359 / NBRC 107923 / NS-E).